Consider the following 666-residue polypeptide: Peptidase S41 family protein phomP1' (666 aa).

The signal sequence occupies residues 1-27 (MSSFLVQTAVVRLFLLGVVFWFPFALS). Asn70, Asn214, and Asn234 each carry an N-linked (GlcNAc...) asparagine glycan. Positions 303–504 (DVAVLQITSF…LLQAQGVRTV (202 aa)) are peptidase S41 domain. Asn555 and Asn612 each carry an N-linked (GlcNAc...) asparagine glycan.

It belongs to the peptidase S41A family.

It functions in the pathway mycotoxin biosynthesis. Peptidase S41 family protein; part of the gene cluster that mediates the biosynthesis of the phomopsins, a group of hexapeptide mycotoxins which infects lupins and causes lupinosis disease in livestock. Within the pathway, phomP1 and phomP1' are probably involved in the processing of the phomA and phomA' precursors. The pathway starts with the processing of the precursor phomA by several endopeptidases including kexin proteases as well as the cluster-specific S41 family peptidase phomP1 and the oligopeptidase phomG to produce 10 identical copies of the hexapeptide Tyr-Val-Ile-Pro-Ile-Asp. After being excised from the precursor peptide, the core peptides are cyclized and modified post-translationally by enzymes encoded within the gene cluster. The timing and order of proteolysis of the phomA precursor and PTMs are still unknown. Two tyrosinase-like enzymes, phomQ1 and phomQ2, catalyze the chlorination and hydroxylation of Tyr, respectively. PhomYb, is proposed to be involved in the construction of the macrocyclic structure. The other 4 ustYa family proteins may be involved in PTMs that generate the unique structure of phomopsin A. PhomYa is required for the hydroxylation of C-beta of Tyr. PhomYc, phomYd, and phomYe are responsible for the biosynthesis of 2,3-dehydroisoleucine (dIle), 2,3-dehydroaspartic acid (dAsp), and 3,4-dehydroproline (dPro), respectively. While dIle formation by phomYc is indispensable for the installation of dAsp by phomYd, the order of the other PTMs have not been elucidated yet. Most of the biosynthetic enzymes likely have broad substrate specificity, and thus, there might be a metabolic grid from a precursor to phomopsin A. The enzyme(s) responsible for the biosynthesis of 3,4-dehydrovaline (dVal) have also not been identified yet. Finally, phomM acts as an S-adenosylmethionine-dependent alpha-N-methyltransferase that catalyzes two successive N-methylation reactions, converting N-desmethyl-phomopsin A to phomopsin A and phomopsin A further to an N,N-dimethylated congener called phomopsin E. This Diaporthe leptostromiformis (Lupinosis disease fungus) protein is Peptidase S41 family protein phomP1'.